Reading from the N-terminus, the 349-residue chain is tRNA pseudouridine synthase D (349 aa).

Phenylalanine 27 is a binding site for substrate. Aspartate 80 functions as the Nucleophile in the catalytic mechanism. Asparagine 129 contributes to the substrate binding site. In terms of domain architecture, TRUD spans 155-303 (GVPNYFGAQR…VEAARRAMLL (149 aa)). Phenylalanine 329 lines the substrate pocket.

This sequence belongs to the pseudouridine synthase TruD family.

The enzyme catalyses uridine(13) in tRNA = pseudouridine(13) in tRNA. In terms of biological role, responsible for synthesis of pseudouridine from uracil-13 in transfer RNAs. The polypeptide is tRNA pseudouridine synthase D (Citrobacter koseri (strain ATCC BAA-895 / CDC 4225-83 / SGSC4696)).